A 760-amino-acid chain; its full sequence is MQLNSLGFPRIGRRRELKFALEKYWRGESTQAELHEVARELRRTHWQWQVAAGIEQVPVGDFAFYDQVLTLSATLNAIPDRHRGEGAIDLDTLFRVARGRAPTGTDAPASEMTKYFNTNYHYLVPELKQDQVFSIAYEQFFDEVAEAQALGYKAKPVLLGPVSYLYLAKTVGQDFDKLSLLPNLLKAYAEILARFAAQGVTWVQLEEPILALELTHEWQAAISESYQALKTAQVKILLTSYYGSISHHQALVSALPVAGLHLDLVTAPEQLALFANALRPDQILSVGVVNGRNVWAAEVDLIVERIGSVARDLCSQDGSRLWIGTSCSLLHSPVDLEVETTLAPTLRQQLAFAKQKLLELANVRQLLQAPESVAAKEIVNTCLARREAKAQAADAKVIARVAALTPADYERVSEFTERQAVQQRKYRLPLLPTTTIGSFPQTPAIRGLRSRWRKGELSDAQYTEQLQQVTRDTIDRQLKLGIDVLVHGEAERNDMVEYFGEQLEGVGFTKNGWVQSYGSRCVKPPLIYGDVSRPKAMTVDWAVFAQSLTDKPVKGMLTGPVTILHWSFAREDISRDTIATQLALAIRDEVVDLQHAGIGIIQIDEPAFREGLPLKQSEWQAYLDWAVNAFKLSAAGVVDETQIHTHMCYSEFNDTIAAIAAMDADVITIETSRSRMELLNAFEDFEYPNEIGPGVYDIHSPNTPSVEAMVHLIEKAAQKVPVRQLWVNPDCGLKTRTWDEVEPALKNMVDATRELRRRLG.

5-methyltetrahydropteroyltri-L-glutamate-binding positions include 15 to 18 (RELK) and Lys-114. L-homocysteine is bound by residues 436-438 (IGS) and Glu-489. Residues 436–438 (IGS) and Glu-489 each bind L-methionine. 5-methyltetrahydropteroyltri-L-glutamate-binding positions include 520–521 (RC) and Trp-566. Position 604 (Asp-604) interacts with L-homocysteine. An L-methionine-binding site is contributed by Asp-604. Glu-610 is a 5-methyltetrahydropteroyltri-L-glutamate binding site. Zn(2+) is bound by residues His-646, Cys-648, and Glu-670. His-699 (proton donor) is an active-site residue. Cys-731 is a Zn(2+) binding site.

Belongs to the vitamin-B12 independent methionine synthase family. Requires Zn(2+) as cofactor.

It catalyses the reaction 5-methyltetrahydropteroyltri-L-glutamate + L-homocysteine = tetrahydropteroyltri-L-glutamate + L-methionine. It functions in the pathway amino-acid biosynthesis; L-methionine biosynthesis via de novo pathway; L-methionine from L-homocysteine (MetE route): step 1/1. Its function is as follows. Catalyzes the transfer of a methyl group from 5-methyltetrahydrofolate to homocysteine resulting in methionine formation. This is 5-methyltetrahydropteroyltriglutamate--homocysteine methyltransferase from Shewanella oneidensis (strain ATCC 700550 / JCM 31522 / CIP 106686 / LMG 19005 / NCIMB 14063 / MR-1).